Here is a 165-residue protein sequence, read N- to C-terminus: Nucleotide-binding protein P9215_05621 (165 aa).

Belongs to the YajQ family.

Functionally, nucleotide-binding protein. This is Nucleotide-binding protein P9215_05621 from Prochlorococcus marinus (strain MIT 9215).